The primary structure comprises 1236 residues: Complement factor H (1236 aa).

A signal peptide spans 1-18; the sequence is MRFPAKIVWLVLWTVCVA. Sushi domains lie at 19-82, 83-143, 144-207, 208-264, 265-322, 325-383, 385-442, 444-505, 507-562, 565-623, 627-685, 688-745, 750-804, 809-866, 868-936, 937-994, 995-1053, 1054-1111, 1114-1172, and 1173-1235; these read EDCK…ICRK, KPCA…ICEV, VKCL…KCVE, IFCK…TCIE, ITCD…RCAW, CSYP…EEPC, RQCI…RCIR, KTCS…VCIK, CDRP…KAAC, RECS…TCKV, KSCA…VCIE, RTCG…QCIA, RKCK…DCNE, QLCP…RCIE, IGCS…QCVG, LPCG…DCIS, TNCV…ACRD, VSCG…QCKD, GKCG…KCLE, and ACVI…YPRC. 40 disulfide bridges follow: C21-C66, C52-C80, C85-C129, C114-C141, C146-C192, C178-C205, C210-C251, C237-C262, C267-C309, C294-C320, C325-C372, C355-C383, C387-C429, C414-C440, C446-C492, C475-C503, C507-C551, C534-C562, C567-C609, C595-C621, C629-C672, C658-C683, C690-C732, C718-C743, C752-C791, C780-C802, C811-C853, C839-C864, C870-C923, C909-C934, C939-C981, C967-C992, C997-C1040, C1026-C1051, C1056-C1098, C1084-C1109, C1116-C1159, C1145-C1170, C1174-C1225, and C1208-C1235. Y168 and Y170 each carry sulfotyrosine. Sulfotyrosine occurs at positions 465 and 473. Residues Y575, Y579, and Y585 each carry the sulfotyrosine modification. A glycan (N-linked (GlcNAc...) asparagine) is linked at N775. N-linked (GlcNAc...) asparagine glycosylation is present at N1100.

Homodimer. Also forms homooligomers. Interacts with complement protein C3b; this interaction inhibits complement activation. Interacts with complement protein C3d. Interacts with CR3/ITGAM; this interaction mediates adhesion of neutrophils to pathogens leading to pathogen clearance. Post-translationally, sulfated on tyrosine residues. In terms of tissue distribution, CFH is one of the most abundant complement components in blood where the liver is the major source of CFH protein in vivo. in addition, CFH is secreted by additional cell types including monocytes, fibroblasts, or endothelial cells.

The protein resides in the secreted. Glycoprotein that plays an essential role in maintaining a well-balanced immune response by modulating complement activation. Acts as a soluble inhibitor of complement, where its binding to self markers such as glycan structures prevents complement activation and amplification on cell surfaces. Accelerates the decay of the complement alternative pathway (AP) C3 convertase C3bBb, thus preventing local formation of more C3b, the central player of the complement amplification loop. As a cofactor of the serine protease factor I, CFH also regulates proteolytic degradation of already-deposited C3b. In addition, mediates several cellular responses through interaction with specific receptors. For example, interacts with CR3/ITGAM receptor and thereby mediates the adhesion of human neutrophils to different pathogens. In turn, these pathogens are phagocytosed and destroyed. This Bos taurus (Bovine) protein is Complement factor H (CFH).